Consider the following 230-residue polypeptide: Ureidoacrylate amidohydrolase RutB (230 aa).

Asp24 (proton acceptor) is an active-site residue. The active site involves Lys133. The Nucleophile role is filled by Cys166.

The protein belongs to the isochorismatase family. RutB subfamily.

The catalysed reaction is (Z)-3-ureidoacrylate + H2O + H(+) = (Z)-3-aminoacrylate + NH4(+) + CO2. The enzyme catalyses (Z)-3-ureidoacrylate + H2O = (Z)-3-aminoacrylate + carbamate + H(+). It catalyses the reaction (Z)-2-methylureidoacrylate + H2O + H(+) = (Z)-2-methylaminoacrylate + NH4(+) + CO2. Its function is as follows. Hydrolyzes ureidoacrylate to form aminoacrylate and carbamate. The carbamate hydrolyzes spontaneously, thereby releasing one of the nitrogen atoms of the pyrimidine ring as ammonia and one of its carbon atoms as CO2. The chain is Ureidoacrylate amidohydrolase RutB from Escherichia coli (strain K12 / MC4100 / BW2952).